The chain runs to 340 residues: Coproporphyrin III ferrochelatase (340 aa).

2 residues coordinate Fe-coproporphyrin III: serine 52 and tyrosine 121. Fe(2+) contacts are provided by histidine 177 and glutamate 260.

The protein belongs to the ferrochelatase family.

Its subcellular location is the cytoplasm. The enzyme catalyses Fe-coproporphyrin III + 2 H(+) = coproporphyrin III + Fe(2+). It participates in porphyrin-containing compound metabolism; protoheme biosynthesis. Its function is as follows. Involved in coproporphyrin-dependent heme b biosynthesis. Catalyzes the insertion of ferrous iron into coproporphyrin III to form Fe-coproporphyrin III. This chain is Coproporphyrin III ferrochelatase, found in Mycobacteroides abscessus (strain ATCC 19977 / DSM 44196 / CCUG 20993 / CIP 104536 / JCM 13569 / NCTC 13031 / TMC 1543 / L948) (Mycobacterium abscessus).